The primary structure comprises 114 residues: Nucleoid-associated protein CKL_3826 (114 aa).

It belongs to the YbaB/EbfC family. In terms of assembly, homodimer.

Its subcellular location is the cytoplasm. The protein resides in the nucleoid. Binds to DNA and alters its conformation. May be involved in regulation of gene expression, nucleoid organization and DNA protection. This Clostridium kluyveri (strain ATCC 8527 / DSM 555 / NBRC 12016 / NCIMB 10680 / K1) protein is Nucleoid-associated protein CKL_3826.